A 604-amino-acid polypeptide reads, in one-letter code: ATP-dependent RNA helicase DED1 (604 aa).

The span at Met1 to Asn19 shows a compositional bias: polar residues. A disordered region spans residues Met1–Ser55. Ala2 is modified (N-acetylalanine). A compositionally biased stretch (low complexity) spans Arg34 to Gly45. The segment covering Gly46 to Ser55 has biased composition (gly residues). Arg51 is subject to Omega-N-methylarginine. Arg62 is subject to Dimethylated arginine; alternate. At Arg62 the chain carries Omega-N-methylarginine; alternate. Over residues Asn67–Gly76 the composition is skewed to gly residues. Residues Asn67–Val94 are disordered. The Q motif signature appears at Thr142–Lys170. Residue Lys158 forms a Glycyl lysine isopeptide (Lys-Gly) (interchain with G-Cter in ubiquitin) linkage. The region spanning Val173–Leu362 is the Helicase ATP-binding domain. Ala186 to Thr193 is an ATP binding site. Phosphoserine is present on residues Ser215, Ser218, and Ser263. The short motif at Asp306–Asp309 is the DEAD box element. Residues Asn373–Met533 form the Helicase C-terminal domain. The segment at Met533–Trp604 is disordered. Phosphoserine occurs at positions 535, 539, and 543. Position 545 is a dimethylated arginine; alternate (Arg545). An Omega-N-methylarginine; alternate modification is found at Arg545. Ser572 and Ser576 each carry phosphoserine. Arg578 is modified (omega-N-methylarginine). The segment covering Gly584 to Trp604 has biased composition (low complexity). Ser598 bears the Phosphoserine mark.

This sequence belongs to the DEAD box helicase family. DDX3/DED1 subfamily. Interacts with the L-A virus GAG protein and the whole L-A virus particles.

The protein resides in the cytoplasm. The catalysed reaction is ATP + H2O = ADP + phosphate + H(+). Functionally, ATP-binding RNA helicase involved in translation initiation. Remodels RNA in response to ADP and ATP concentrations by facilitating disruption, but also formation of RNA duplexes. Has weak ATP-dependent affinity for dsRNA, but strong ATP-dependent affinity for ssRNA. Acts as a virus host factor involved in the replication of the MBV and the L-A viruses by promoting the negative-strand RNA synthesis. May be involved in recognition of the preinitiation complex and DNA binding of the RNA polymerase III and play a role in mRNA splicing. This chain is ATP-dependent RNA helicase DED1, found in Saccharomyces cerevisiae (strain ATCC 204508 / S288c) (Baker's yeast).